Here is a 314-residue protein sequence, read N- to C-terminus: MTTVLLTSTSGPLSDDAARSVRELVALETERLGVPPLSEQPLLNLRDPRARVVHIMDTQGGDVTGYAQLDVSREGGSLELTARCADRTQCVGALLNEAELIAQDHDVVVRPWVHGDDPDVTRVLAQRGYVPARTLLVLSRDLSLADTQALATPVVPEGFVCRRFDPISDADSLLAANSDAFSWHPEQGRLTHHDLSMRMKEPWFTPDHLHVVTPVSESARIVGFVWLKAEPHSRSIELYVLGVTEAAQGQGVGRFLTELATVTALNQGYPRLHLYVEADNTRALALYTQHGFAPMERHVNFTQPTGELGHEPPS.

A 1D-myo-inositol 2-(L-cysteinylamino)-2-deoxy-alpha-D-glucopyranoside-binding site is contributed by Glu39. Acetyl-CoA is bound at residue 80–82 (LTA). The region spanning 159–313 (FVCRRFDPIS…PTGELGHEPP (155 aa)) is the N-acetyltransferase domain. 3 residues coordinate 1D-myo-inositol 2-(L-cysteinylamino)-2-deoxy-alpha-D-glucopyranoside: Glu186, Lys228, and Glu237. Residues 241-243 (LGV) and 248-254 (QGQGVGR) each bind acetyl-CoA. Tyr275 is a 1D-myo-inositol 2-(L-cysteinylamino)-2-deoxy-alpha-D-glucopyranoside binding site.

Belongs to the acetyltransferase family. MshD subfamily. Monomer.

It carries out the reaction 1D-myo-inositol 2-(L-cysteinylamino)-2-deoxy-alpha-D-glucopyranoside + acetyl-CoA = mycothiol + CoA + H(+). In terms of biological role, catalyzes the transfer of acetyl from acetyl-CoA to desacetylmycothiol (Cys-GlcN-Ins) to form mycothiol. This Jonesia denitrificans (strain ATCC 14870 / DSM 20603 / BCRC 15368 / CIP 55.134 / JCM 11481 / NBRC 15587 / NCTC 10816 / Prevot 55134) (Listeria denitrificans) protein is Mycothiol acetyltransferase.